We begin with the raw amino-acid sequence, 391 residues long: Chorismate synthase (391 aa).

NADP(+) contacts are provided by R39 and R45. Residues 133–135 (RAS), 254–255 (QA), G299, 314–318 (KPIAT), and R340 each bind FMN.

This sequence belongs to the chorismate synthase family. As to quaternary structure, homotetramer. Requires FMNH2 as cofactor.

It carries out the reaction 5-O-(1-carboxyvinyl)-3-phosphoshikimate = chorismate + phosphate. It participates in metabolic intermediate biosynthesis; chorismate biosynthesis; chorismate from D-erythrose 4-phosphate and phosphoenolpyruvate: step 7/7. Functionally, catalyzes the anti-1,4-elimination of the C-3 phosphate and the C-6 proR hydrogen from 5-enolpyruvylshikimate-3-phosphate (EPSP) to yield chorismate, which is the branch point compound that serves as the starting substrate for the three terminal pathways of aromatic amino acid biosynthesis. This reaction introduces a second double bond into the aromatic ring system. This chain is Chorismate synthase, found in Symbiobacterium thermophilum (strain DSM 24528 / JCM 14929 / IAM 14863 / T).